Reading from the N-terminus, the 308-residue chain is Pantothenate synthetase (308 aa).

39–46 serves as a coordination point for ATP; it reads MGALHDGH. The active-site Proton donor is the H46. Q71 contacts (R)-pantoate. Q71 provides a ligand contact to beta-alanine. 157–160 contacts ATP; sequence GEKD. Q163 is a binding site for (R)-pantoate. ATP is bound by residues V186 and 194–197; that span reads MSSR. The segment at 286–308 is disordered; the sequence is IETPAGTAGPDGDRQYAQSPWRN.

It belongs to the pantothenate synthetase family. Homodimer.

It is found in the cytoplasm. It catalyses the reaction (R)-pantoate + beta-alanine + ATP = (R)-pantothenate + AMP + diphosphate + H(+). The protein operates within cofactor biosynthesis; (R)-pantothenate biosynthesis; (R)-pantothenate from (R)-pantoate and beta-alanine: step 1/1. Functionally, catalyzes the condensation of pantoate with beta-alanine in an ATP-dependent reaction via a pantoyl-adenylate intermediate. The sequence is that of Pantothenate synthetase from Mycobacterium avium (strain 104).